The following is a 377-amino-acid chain: Chorismate synthase (377 aa).

Residues Arg-48 and Arg-54 each coordinate NADP(+). FMN-binding positions include 125–127 (RSS), 238–239 (NA), Gly-278, 293–297 (KPTSS), and Arg-319.

It belongs to the chorismate synthase family. As to quaternary structure, homotetramer. FMNH2 serves as cofactor.

It carries out the reaction 5-O-(1-carboxyvinyl)-3-phosphoshikimate = chorismate + phosphate. The protein operates within metabolic intermediate biosynthesis; chorismate biosynthesis; chorismate from D-erythrose 4-phosphate and phosphoenolpyruvate: step 7/7. Functionally, catalyzes the anti-1,4-elimination of the C-3 phosphate and the C-6 proR hydrogen from 5-enolpyruvylshikimate-3-phosphate (EPSP) to yield chorismate, which is the branch point compound that serves as the starting substrate for the three terminal pathways of aromatic amino acid biosynthesis. This reaction introduces a second double bond into the aromatic ring system. The sequence is that of Chorismate synthase from Aromatoleum aromaticum (strain DSM 19018 / LMG 30748 / EbN1) (Azoarcus sp. (strain EbN1)).